The following is a 313-amino-acid chain: Methionyl-tRNA formyltransferase (313 aa).

A (6S)-5,6,7,8-tetrahydrofolate-binding site is contributed by 112–115 (SLLP).

This sequence belongs to the Fmt family.

It catalyses the reaction L-methionyl-tRNA(fMet) + (6R)-10-formyltetrahydrofolate = N-formyl-L-methionyl-tRNA(fMet) + (6S)-5,6,7,8-tetrahydrofolate + H(+). In terms of biological role, attaches a formyl group to the free amino group of methionyl-tRNA(fMet). The formyl group appears to play a dual role in the initiator identity of N-formylmethionyl-tRNA by promoting its recognition by IF2 and preventing the misappropriation of this tRNA by the elongation apparatus. This Roseiflexus castenholzii (strain DSM 13941 / HLO8) protein is Methionyl-tRNA formyltransferase.